The primary structure comprises 88 residues: Small ribosomal subunit protein bS20 (88 aa).

The disordered stretch occupies residues 1-28 (MANTVQARKRARQAVKQNEHNSSLRSKL).

Belongs to the bacterial ribosomal protein bS20 family.

Functionally, binds directly to 16S ribosomal RNA. The chain is Small ribosomal subunit protein bS20 from Polynucleobacter necessarius subsp. necessarius (strain STIR1).